The following is a 178-amino-acid chain: DNA-directed RNA polymerase subunit beta (178 aa).

This sequence belongs to the RNA polymerase beta chain family. As to quaternary structure, the RNAP catalytic core consists of 2 alpha, 1 beta, 1 beta' and 1 omega subunit. When a sigma factor is associated with the core the holoenzyme is formed, which can initiate transcription.

It catalyses the reaction RNA(n) + a ribonucleoside 5'-triphosphate = RNA(n+1) + diphosphate. DNA-dependent RNA polymerase catalyzes the transcription of DNA into RNA using the four ribonucleoside triphosphates as substrates. This is DNA-directed RNA polymerase subunit beta (rpoB) from Liberibacter asiaticus (Citrus greening disease).